The sequence spans 191 residues: Large ribosomal subunit protein bL9 (191 aa).

The disordered stretch occupies residues E171 to E191.

The protein belongs to the bacterial ribosomal protein bL9 family.

Its function is as follows. Binds to the 23S rRNA. This Rhizobium meliloti (strain 1021) (Ensifer meliloti) protein is Large ribosomal subunit protein bL9.